A 467-amino-acid polypeptide reads, in one-letter code: 3-isopropylmalate dehydratase large subunit (467 aa).

[4Fe-4S] cluster-binding residues include C347, C407, and C410. The span at 422–442 (QISASSSNRNFKGRQGSSSGR) shows a compositional bias: polar residues. Residues 422-443 (QISASSSNRNFKGRQGSSSGRT) are disordered.

This sequence belongs to the aconitase/IPM isomerase family. LeuC type 1 subfamily. As to quaternary structure, heterodimer of LeuC and LeuD. [4Fe-4S] cluster is required as a cofactor.

The catalysed reaction is (2R,3S)-3-isopropylmalate = (2S)-2-isopropylmalate. The protein operates within amino-acid biosynthesis; L-leucine biosynthesis; L-leucine from 3-methyl-2-oxobutanoate: step 2/4. In terms of biological role, catalyzes the isomerization between 2-isopropylmalate and 3-isopropylmalate, via the formation of 2-isopropylmaleate. In Nostoc punctiforme (strain ATCC 29133 / PCC 73102), this protein is 3-isopropylmalate dehydratase large subunit.